The following is a 132-amino-acid chain: Large ribosomal subunit protein bL19 (132 aa).

This sequence belongs to the bacterial ribosomal protein bL19 family.

In terms of biological role, this protein is located at the 30S-50S ribosomal subunit interface and may play a role in the structure and function of the aminoacyl-tRNA binding site. The protein is Large ribosomal subunit protein bL19 of Methylobacterium radiotolerans (strain ATCC 27329 / DSM 1819 / JCM 2831 / NBRC 15690 / NCIMB 10815 / 0-1).